Here is a 166-residue protein sequence, read N- to C-terminus: Probable DHNTP pyrophosphohydrolase (166 aa).

In terms of domain architecture, Nudix hydrolase spans 42 to 166; sequence DLQLSASALV…FKKYYRYKNI (125 aa). Positions 73–94 match the Nudix box motif; it reads GHVELKESPLDTAIREFHEETG. Mg(2+) is bound by residues glutamate 88 and glutamate 92.

Belongs to the Nudix hydrolase family. As to quaternary structure, monomer. Requires Mg(2+) as cofactor.

It participates in cofactor biosynthesis; tetrahydrofolate biosynthesis; 2-amino-4-hydroxy-6-hydroxymethyl-7,8-dihydropteridine diphosphate from 7,8-dihydroneopterin triphosphate: step 1/4. Functionally, probably mediates the removal of pyrophosphate from dihydroneopterin triphosphate (DHNTP), a possible step in the pterin branch of the folate synthesis pathway. This chain is Probable DHNTP pyrophosphohydrolase (folQ), found in Lactococcus lactis subsp. cremoris (strain MG1363).